The sequence spans 413 residues: Tubby-like F-box protein 6 (413 aa).

In terms of domain architecture, F-box spans 67-122 (SIWVDLPPELLLDIIQRIESEQSLWPGRRDVVACASVCKSWREMTKEVVKVPELSG).

This sequence belongs to the TUB family. In terms of tissue distribution, ubiquitous, with higher levels in flowers.

The chain is Tubby-like F-box protein 6 from Arabidopsis thaliana (Mouse-ear cress).